A 260-amino-acid polypeptide reads, in one-letter code: uncharacterized protein (260 aa).

Positions 214–252 (IHQFIETEIERIMEAAKELKAEKKDMTSELNRLLLNTVE) form a coiled coil.

This is an uncharacterized protein from Bacillus subtilis (strain 168).